The chain runs to 495 residues: Meiosis-specific nuclear structural protein 1 (495 aa).

Residues Met-1–Glu-315 are interaction with BBOF1. Coiled-coil stretches lie at residues Gln-61–Met-215 and Ile-245–Leu-361. The tract at residues Glu-172–Gly-199 is disordered.

This sequence belongs to the MNS1 family. Able to form oligomers. Microtubule inner protein component of sperm flagellar doublet microtubules. Interacts with ODAD1. Interacts with BBOF1. As to expression, expressed in trachea multiciliated cells.

The protein resides in the nucleus. It localises to the cytoplasm. Its subcellular location is the cytoskeleton. It is found in the cilium axoneme. The protein localises to the flagellum axoneme. Functionally, microtubule inner protein (MIP) part of the dynein-decorated doublet microtubules (DMTs) in cilia axoneme, which is required for motile cilia beating. May play a role in the control of meiotic division and germ cell differentiation through regulation of pairing and recombination during meiosis. Required for sperm flagella assembly. May play a role in the assembly and function of the outer dynein arm-docking complex (ODA-DC). ODA-DC mediates outer dynein arms (ODA) binding onto the axonemal doublet microtubules. This Bos taurus (Bovine) protein is Meiosis-specific nuclear structural protein 1 (MNS1).